A 387-amino-acid polypeptide reads, in one-letter code: Succinate--CoA ligase [ADP-forming] subunit beta (387 aa).

The ATP-grasp domain maps to 9–245 (KDLLESYGLK…KSQENAKELK (237 aa)). ATP-binding positions include Lys46, 53–55 (GRG), Glu100, Tyr103, and Glu108. Mg(2+) contacts are provided by Asn200 and Asp214. Substrate is bound by residues Asn265 and 322–324 (GIV).

Belongs to the succinate/malate CoA ligase beta subunit family. Heterotetramer of two alpha and two beta subunits. The cofactor is Mg(2+).

It catalyses the reaction succinate + ATP + CoA = succinyl-CoA + ADP + phosphate. It carries out the reaction GTP + succinate + CoA = succinyl-CoA + GDP + phosphate. The protein operates within carbohydrate metabolism; tricarboxylic acid cycle; succinate from succinyl-CoA (ligase route): step 1/1. In terms of biological role, succinyl-CoA synthetase functions in the citric acid cycle (TCA), coupling the hydrolysis of succinyl-CoA to the synthesis of either ATP or GTP and thus represents the only step of substrate-level phosphorylation in the TCA. The beta subunit provides nucleotide specificity of the enzyme and binds the substrate succinate, while the binding sites for coenzyme A and phosphate are found in the alpha subunit. The polypeptide is Succinate--CoA ligase [ADP-forming] subunit beta (Francisella tularensis subsp. holarctica (strain FTNF002-00 / FTA)).